The following is a 1497-amino-acid chain: DNA-directed RNA polymerase subunit beta (1497 aa).

This sequence belongs to the RNA polymerase beta chain family. The RNAP catalytic core consists of 2 alpha, 1 beta, 1 beta' and 1 omega subunit. When a sigma factor is associated with the core the holoenzyme is formed, which can initiate transcription.

The catalysed reaction is RNA(n) + a ribonucleoside 5'-triphosphate = RNA(n+1) + diphosphate. Its function is as follows. DNA-dependent RNA polymerase catalyzes the transcription of DNA into RNA using the four ribonucleoside triphosphates as substrates. This is DNA-directed RNA polymerase subunit beta from Trichlorobacter lovleyi (strain ATCC BAA-1151 / DSM 17278 / SZ) (Geobacter lovleyi).